Consider the following 36-residue polypeptide: Potassium channel toxin alpha-KTx 2.7 (36 aa).

3 cysteine pairs are disulfide-bonded: cysteine 7/cysteine 29, cysteine 13/cysteine 34, and cysteine 17/cysteine 36.

This sequence belongs to the short scorpion toxin superfamily. Potassium channel inhibitor family. Alpha-KTx 02 subfamily. As to expression, expressed by the venom gland.

It is found in the secreted. Its function is as follows. Inhibitor of voltage-gated potassium channels (Kv). This protein is capable of displacing the binding of radio-labeled noxiustoxin (AC P08815) to rat brain synaptosomes with high affinity (about 100 pM). It is also capable of inhibiting transient potassium-currents (resembling I(A)-type currents), in cultured rat cerebellar granule cells. About 50% of the peak currents are reduced by application of a 1.5 uM solution of this toxin. Is lethal to mice (when less than 100 ug are injected). In Centruroides limpidus (Mexican scorpion), this protein is Potassium channel toxin alpha-KTx 2.7.